The chain runs to 172 residues: Large ribosomal subunit protein bL17 (172 aa).

The interval 153–172 (AQAAEPVAAAEPATPATTAG) is disordered.

The protein belongs to the bacterial ribosomal protein bL17 family. As to quaternary structure, part of the 50S ribosomal subunit. Contacts protein L32.

The sequence is that of Large ribosomal subunit protein bL17 from Sorangium cellulosum (strain So ce56) (Polyangium cellulosum (strain So ce56)).